We begin with the raw amino-acid sequence, 101 residues long: Phosphoribosyl-AMP cyclohydrolase (101 aa).

Position 71 (aspartate 71) interacts with Mg(2+). Cysteine 72 lines the Zn(2+) pocket. Mg(2+)-binding residues include aspartate 73 and aspartate 75. Zn(2+) contacts are provided by cysteine 88 and cysteine 95.

The protein belongs to the PRA-CH family. In terms of assembly, homodimer. Mg(2+) is required as a cofactor. The cofactor is Zn(2+).

It is found in the cytoplasm. The enzyme catalyses 1-(5-phospho-beta-D-ribosyl)-5'-AMP + H2O = 1-(5-phospho-beta-D-ribosyl)-5-[(5-phospho-beta-D-ribosylamino)methylideneamino]imidazole-4-carboxamide. The protein operates within amino-acid biosynthesis; L-histidine biosynthesis; L-histidine from 5-phospho-alpha-D-ribose 1-diphosphate: step 3/9. Its function is as follows. Catalyzes the hydrolysis of the adenine ring of phosphoribosyl-AMP. The polypeptide is Phosphoribosyl-AMP cyclohydrolase (Bacillus cereus (strain 03BB102)).